The primary structure comprises 114 residues: T cell receptor beta variable 6-6 (114 aa).

A signal peptide spans 1 to 21 (MSISLLCCAAFPLLWAGPVNA). The region spanning 22 to 114 (GVTQTPKFRI…TSVYFCASSY (93 aa)) is the Ig-like domain. The cysteines at positions 42 and 110 are disulfide-linked. Asn84 carries an N-linked (GlcNAc...) asparagine glycan.

Alpha-beta TR is a heterodimer composed of an alpha and beta chain; disulfide-linked. The alpha-beta TR is associated with the transmembrane signaling CD3 coreceptor proteins to form the TR-CD3 (TcR or TCR). The assembly of alpha-beta TR heterodimers with CD3 occurs in the endoplasmic reticulum where a single alpha-beta TR heterodimer associates with one CD3D-CD3E heterodimer, one CD3G-CD3E heterodimer and one CD247 homodimer forming a stable octameric structure. CD3D-CD3E and CD3G-CD3E heterodimers preferentially associate with TR alpha and TR beta chains, respectively. The association of the CD247 homodimer is the last step of TcR assembly in the endoplasmic reticulum and is required for transport to the cell surface.

It is found in the cell membrane. In terms of biological role, v region of the variable domain of T cell receptor (TR) beta chain that participates in the antigen recognition. Alpha-beta T cell receptors are antigen specific receptors which are essential to the immune response and are present on the cell surface of T lymphocytes. Recognize peptide-major histocompatibility (MH) (pMH) complexes that are displayed by antigen presenting cells (APC), a prerequisite for efficient T cell adaptive immunity against pathogens. Binding of alpha-beta TR to pMH complex initiates TR-CD3 clustering on the cell surface and intracellular activation of LCK that phosphorylates the ITAM motifs of CD3G, CD3D, CD3E and CD247 enabling the recruitment of ZAP70. In turn ZAP70 phosphorylates LAT, which recruits numerous signaling molecules to form the LAT signalosome. The LAT signalosome propagates signal branching to three major signaling pathways, the calcium, the mitogen-activated protein kinase (MAPK) kinase and the nuclear factor NF-kappa-B (NF-kB) pathways, leading to the mobilization of transcription factors that are critical for gene expression and essential for T cell growth and differentiation. The T cell repertoire is generated in the thymus, by V-(D)-J rearrangement. This repertoire is then shaped by intrathymic selection events to generate a peripheral T cell pool of self-MH restricted, non-autoaggressive T cells. Post-thymic interaction of alpha-beta TR with the pMH complexes shapes TR structural and functional avidity. This Homo sapiens (Human) protein is T cell receptor beta variable 6-6.